The following is an 859-amino-acid chain: Leucine--tRNA ligase (859 aa).

The 'HIGH' region signature appears at 42-52 (PYPSGRLHMGH). Positions 618–622 (KMSKS) match the 'KMSKS' region motif. K621 is an ATP binding site.

It belongs to the class-I aminoacyl-tRNA synthetase family.

It is found in the cytoplasm. The enzyme catalyses tRNA(Leu) + L-leucine + ATP = L-leucyl-tRNA(Leu) + AMP + diphosphate. This is Leucine--tRNA ligase from Shewanella oneidensis (strain ATCC 700550 / JCM 31522 / CIP 106686 / LMG 19005 / NCIMB 14063 / MR-1).